The following is a 2353-amino-acid chain: Otogelin-like protein (2353 aa).

A signal peptide spans 1–31 (MNIVRKLNLMIPWSIFLLHVLLFSLQEYICA). In terms of domain architecture, VWFD 1 spans 121–297 (GICKTWGQYH…VQTPDDTKCV (177 aa)). 2 disulfide bridges follow: cysteine 123–cysteine 257 and cysteine 145–cysteine 296. Asparagine 144 carries N-linked (GlcNAc...) asparagine glycosylation. Residues 390–443 (CDDSFVHRDCISCCPPTCTFEKQCLGSNLHCLDGCYCPDGLVMDNGTCISLENC) form the TIL 1 domain. N-linked (GlcNAc...) asparagine glycosylation is found at asparagine 434 and asparagine 473. The VWFD 2 domain maps to 481 to 654 (VQCSVVGDSH…NAWRVSSTCF (174 aa)). 3 disulfide bridges follow: cysteine 483-cysteine 618, cysteine 505-cysteine 653, and cysteine 527-cysteine 535. Residues 745–800 (CQKGMLYHHCSSFCLHSCISLSSPEQCSDDCAEGCNCPEGKFYEDTLNFCVPIFHC) enclose the TIL 2 domain. N-linked (GlcNAc...) asparagine glycosylation is found at asparagine 826 and asparagine 876. The region spanning 946–1115 (AVCTIYGDRH…SWALGQCESP (170 aa)) is the VWFD 3 domain. 2 disulfide bridges follow: cysteine 948-cysteine 1078 and cysteine 992-cysteine 999. 3 N-linked (GlcNAc...) asparagine glycosylation sites follow: asparagine 1289, asparagine 1604, and asparagine 2198. The region spanning 1534 to 1723 (CRCSMLSELS…SWEIEKSFEV (190 aa)) is the VWFD 4 domain. An intrachain disulfide couples cysteine 1536 to cysteine 1683. Disulfide bonds link cysteine 2261–cysteine 2317, cysteine 2282–cysteine 2331, cysteine 2293–cysteine 2348, and cysteine 2297–cysteine 2350. Residues 2261 to 2353 (CKREERICQK…EPIDCTCQWN (93 aa)) enclose the CTCK domain.

Belongs to the otogelin family. As to expression, expressed at high levels in fetal inner ear and heart. Low levels in fetal skeletal muscle, kidney, spleen and colon. Not detected in fetal liver, lung, brain, nor in fetal stomach. In adult tissues, highest levels in brain, kidney, heart and retina. Relatively low levels in lung, spleen and duodenum. Not detected in adult skeletal muscle, liver, nor testis.

The protein resides in the secreted. This chain is Otogelin-like protein (OTOGL), found in Homo sapiens (Human).